A 300-amino-acid polypeptide reads, in one-letter code: tRNA U34 carboxymethyltransferase (300 aa).

Carboxy-S-adenosyl-L-methionine-binding positions include Lys-73, Trp-87, Lys-92, Gly-111, 133–135, 160–161, Tyr-180, and Arg-293; these read DPS and VE.

It belongs to the class I-like SAM-binding methyltransferase superfamily. CmoB family. Homotetramer.

The enzyme catalyses carboxy-S-adenosyl-L-methionine + 5-hydroxyuridine(34) in tRNA = 5-carboxymethoxyuridine(34) in tRNA + S-adenosyl-L-homocysteine + H(+). In terms of biological role, catalyzes carboxymethyl transfer from carboxy-S-adenosyl-L-methionine (Cx-SAM) to 5-hydroxyuridine (ho5U) to form 5-carboxymethoxyuridine (cmo5U) at position 34 in tRNAs. The protein is tRNA U34 carboxymethyltransferase of Nautilia profundicola (strain ATCC BAA-1463 / DSM 18972 / AmH).